The chain runs to 37 residues: Large ribosomal subunit protein bL36c (37 aa).

This sequence belongs to the bacterial ribosomal protein bL36 family.

Its subcellular location is the plastid. The protein resides in the chloroplast. This Nephroselmis olivacea (Green alga) protein is Large ribosomal subunit protein bL36c (rpl36).